A 613-amino-acid chain; its full sequence is Cilia- and flagella-associated protein 100 (613 aa).

Residues 36–55 (KSKESKKNKGNVTISDRSSN) are disordered. A compositionally biased stretch (polar residues) spans 45–55 (GNVTISDRSSN). Coiled coils occupy residues 167–198 (ALAM…FLEK), 233–260 (VEIR…KHYK), 396–435 (FTKL…DKEV), and 504–580 (GTVQ…RGRK).

The protein belongs to the CFAP100 family.

It localises to the cytoplasm. The protein localises to the cytoskeleton. Its subcellular location is the cilium axoneme. In terms of biological role, may play a role in ciliary/flagellar motility by regulating the assembly and the activity of axonemal inner dynein arm. This Mus musculus (Mouse) protein is Cilia- and flagella-associated protein 100.